The following is a 623-amino-acid chain: ATP-dependent zinc metalloprotease FtsH (623 aa).

Residues 1-7 (MNQSFWR) are Cytoplasmic-facing. The chain crosses the membrane as a helical span at residues 8–28 (PLFAILLFMLVFHLTNIFFAQ). At 29-117 (QGAQVAQISY…EVSALSTETP (89 aa)) the chain is on the periplasmic side. Residues 118-138 (LLLNALIYVAPWVILIAIWWV) form a helical membrane-spanning segment. The Cytoplasmic segment spans residues 139-623 (GMRSMRSQGP…SLNTAQAPPP (485 aa)). An ATP-binding site is contributed by 214 to 221 (GPPGTGKT). His435 serves as a coordination point for Zn(2+). Glu436 is a catalytic residue. His439 and Asp511 together coordinate Zn(2+).

The protein in the central section; belongs to the AAA ATPase family. It in the C-terminal section; belongs to the peptidase M41 family. Homohexamer. It depends on Zn(2+) as a cofactor.

It localises to the cell inner membrane. Its function is as follows. Acts as a processive, ATP-dependent zinc metallopeptidase for both cytoplasmic and membrane proteins. Plays a role in the quality control of integral membrane proteins. The chain is ATP-dependent zinc metalloprotease FtsH from Pelobacter propionicus (strain DSM 2379 / NBRC 103807 / OttBd1).